The chain runs to 135 residues: S-protein homolog 20 (135 aa).

The first 26 residues, 1–26 (MNGSSAFHIILSVTFMVFLFGGLCEA), serve as a signal peptide directing secretion. Asn-88 carries N-linked (GlcNAc...) asparagine glycosylation.

It belongs to the plant self-incompatibility (S1) protein family.

Its subcellular location is the secreted. The protein is S-protein homolog 20 of Arabidopsis thaliana (Mouse-ear cress).